We begin with the raw amino-acid sequence, 241 residues long: DnaA regulatory inactivator Hda (241 aa).

This sequence belongs to the DnaA family. HdA subfamily. As to quaternary structure, the active form seems to be an ADP-bound monomer. Forms the RIDA complex (regulatory inactivation of DnaA) of ATP-DnaA, ADP-Hda and the DNA-loaded beta sliding clamp (dnaN).

In terms of biological role, mediates the interaction of DNA replication initiator protein DnaA with DNA polymerase subunit beta sliding clamp (dnaN). Stimulates hydrolysis of ATP-DnaA to ADP-DnaA, rendering DnaA inactive for reinitiation, a process called regulatory inhibition of DnaA or RIDA. The polypeptide is DnaA regulatory inactivator Hda (Salmonella agona (strain SL483)).